We begin with the raw amino-acid sequence, 433 residues long: Ribosomal protein uS12 methylthiotransferase RimO (433 aa).

Positions 9–124 constitute an MTTase N-terminal domain; that stretch reads NKINVITLGC…LLKALGADYR (116 aa). The [4Fe-4S] cluster site is built by Cys-18, Cys-53, Cys-87, Cys-148, Cys-152, and Cys-155. Positions 134–364 constitute a Radical SAM core domain; that stretch reads TTPKNYAYLK…MDLQSQISWD (231 aa). The region spanning 367 to 433 is the TRAM domain; that stretch reads QEKLGQTFRC…TEFDLYGEPA (67 aa).

The protein belongs to the methylthiotransferase family. RimO subfamily. [4Fe-4S] cluster serves as cofactor.

It is found in the cytoplasm. It catalyses the reaction L-aspartate(89)-[ribosomal protein uS12]-hydrogen + (sulfur carrier)-SH + AH2 + 2 S-adenosyl-L-methionine = 3-methylsulfanyl-L-aspartate(89)-[ribosomal protein uS12]-hydrogen + (sulfur carrier)-H + 5'-deoxyadenosine + L-methionine + A + S-adenosyl-L-homocysteine + 2 H(+). Functionally, catalyzes the methylthiolation of an aspartic acid residue of ribosomal protein uS12. This Flavobacterium psychrophilum (strain ATCC 49511 / DSM 21280 / CIP 103535 / JIP02/86) protein is Ribosomal protein uS12 methylthiotransferase RimO.